The chain runs to 437 residues: Gamma-glutamyl phosphate reductase (437 aa).

This sequence belongs to the gamma-glutamyl phosphate reductase family.

It is found in the cytoplasm. It catalyses the reaction L-glutamate 5-semialdehyde + phosphate + NADP(+) = L-glutamyl 5-phosphate + NADPH + H(+). It participates in amino-acid biosynthesis; L-proline biosynthesis; L-glutamate 5-semialdehyde from L-glutamate: step 2/2. Its function is as follows. Catalyzes the NADPH-dependent reduction of L-glutamate 5-phosphate into L-glutamate 5-semialdehyde and phosphate. The product spontaneously undergoes cyclization to form 1-pyrroline-5-carboxylate. The polypeptide is Gamma-glutamyl phosphate reductase (Synechococcus sp. (strain CC9902)).